Consider the following 805-residue polypeptide: Phenylalanine--tRNA ligase beta subunit (805 aa).

Residues 40-162 enclose the tRNA-binding domain; sequence FKNPDYLQLG…NRDEFGDYLS (123 aa). The B5 domain occupies 412–486; it reads AFNRKIYLNF…KILDLNKIKE (75 aa). Mg(2+) is bound by residues D464, D470, E473, and E474.

It belongs to the phenylalanyl-tRNA synthetase beta subunit family. Type 1 subfamily. As to quaternary structure, tetramer of two alpha and two beta subunits. Mg(2+) is required as a cofactor.

It localises to the cytoplasm. The catalysed reaction is tRNA(Phe) + L-phenylalanine + ATP = L-phenylalanyl-tRNA(Phe) + AMP + diphosphate + H(+). The polypeptide is Phenylalanine--tRNA ligase beta subunit (pheT) (Mycoplasma pneumoniae (strain ATCC 29342 / M129 / Subtype 1) (Mycoplasmoides pneumoniae)).